A 65-amino-acid chain; its full sequence is Photosystem II reaction center protein J (65 aa).

Basic and acidic residues predominate over residues M1–P17. A disordered region spans residues M1 to P21. Residues L36–F56 traverse the membrane as a helical segment.

The protein belongs to the PsbJ family. PSII is composed of 1 copy each of membrane proteins PsbA, PsbB, PsbC, PsbD, PsbE, PsbF, PsbH, PsbI, PsbJ, PsbK, PsbL, PsbM, PsbT, PsbX, PsbY, Psb30/Ycf12, peripheral proteins PsbO, CyanoQ (PsbQ), PsbU, PsbV and a large number of cofactors. It forms dimeric complexes.

It is found in the cellular thylakoid membrane. Functionally, one of the components of the core complex of photosystem II (PSII). PSII is a light-driven water:plastoquinone oxidoreductase that uses light energy to abstract electrons from H(2)O, generating O(2) and a proton gradient subsequently used for ATP formation. It consists of a core antenna complex that captures photons, and an electron transfer chain that converts photonic excitation into a charge separation. This chain is Photosystem II reaction center protein J, found in Prochlorococcus marinus (strain MIT 9313).